The sequence spans 507 residues: Glucose-6-phosphate isomerase (507 aa).

Glu338 (proton donor) is an active-site residue. Catalysis depends on residues His369 and Lys479.

The protein belongs to the GPI family.

The protein localises to the cytoplasm. It carries out the reaction alpha-D-glucose 6-phosphate = beta-D-fructose 6-phosphate. The protein operates within carbohydrate biosynthesis; gluconeogenesis. Its pathway is carbohydrate degradation; glycolysis; D-glyceraldehyde 3-phosphate and glycerone phosphate from D-glucose: step 2/4. Provides a gateway for fructose into the Entner-Doudouroff pathway. In terms of biological role, catalyzes the reversible isomerization of glucose-6-phosphate to fructose-6-phosphate. The protein is Glucose-6-phosphate isomerase of Zymomonas mobilis subsp. mobilis (strain ATCC 31821 / ZM4 / CP4).